The following is a 1299-amino-acid chain: MHTLRGAPALSDFRLAKLLAQCRERVPSVSSIYAEFVHLIDAPAPLSEADLATLGRLLDYGPRVATGARIGSLLLVLPRPGTISPWSSKATDIVHNCGLGERVRRMERGTAFFIAGPDGQALQDAELERLKPVLHDRMTQAVVGRLEDAAILFAGHTPRPFTTVDVLGGGRAALVTANRELGLALADDEMDYLVARFTELKRNPTDVELMMFAQANSEHCRHKIFNASWTIDGKPQERSLFQAIKNTYVQHKEGVLGAYKDNAAVIEGFEVDRFFPSPESGEWGSVREPAHIMIKVETHNHPTAISPYPGAATGAGGEIRDEGATGRGARPKAGLTGFSVSHLRIPGFEQPWEQPYGKPDRIVSALDIMVDGPLGGAAFNNEFGRPNLTGYFRSYEVQVPTPGGVEVRGYHKPIMIAGGLGNIRASHVQKGRLQPGDKLIVLGGPAMLIGLGGGAASSMAQGASAADLDFASVQRDNAEMERRCQEVIDSCWALGDKNPIRSIHDVGAGGLSNAVPELAHDNDLGGRLELRAVPNAEPGMSPVEIWCNEAQERYVLGVAPEDLARFAALCERERAPFSVLGDATAEQTLKLGDTQFGNAPIDLPMDVLFGKPPRMHRDVTSRPVSFAPLTLDGSLALLAERVLSHPTVADKSFLITIGDRTVSGLSSRDQMVGPWQVPVADCAVTLSTVTSTTGEAMAMGERTPLALIDAAASARMAVGEALTNIAAARIGKLSDVKLSANWMAAAGSPGEDASLYAAVHAVGMELCPALGLTIPVGKDSMSMRTVWEEGGARKAVTSPVSLIISAFAPVLDVRKSLTPQLVDVADDTRLLFIDLARGKQRLGGSVVAHVHGQVGPESPDVEDPALLRGFFAAVQALSESGSLLAYHDRSDGGLWATLCEMAFAGRCGLDVDLAPLGGDVTAALFNEELGAVVQVRASDVARVREVLAQHGLSRDVHELGRPVTALQVRVRHGGDTLMAEDTLALRRTWSRVSYEMQKLRDNPICADQESAARSDASDPGLSPKLTFDPAQDVAAPFIAKGARPRVAVLREQGVNSQQEMAAAFTRAGFAAVDVHMSDILSGRVSLEGFKGVLACGGFSYGDVLGAGGGWAKSILFNPRARDAFAAFFARPDSFGLGVCNGCQMMSQLKDIIPGAEHFPRFVRNASEQYEARLSLVEVSKTPSLFYQGMEGSRMLIVTSHGEGRAEFPSVEDAARVNGLGLVTTRWVDNHGRVAESYPANPNGSPHGIAGLTTRDGRFTITMPHPERVHRSVQHSWRPREWGDDGPWMRMFRNARVWLG.

ATP-binding positions include 310 to 321, 389 to 391, and Ala-680; these read GAATGAGGEIRD and TGY. Asp-681, Glu-720, Asn-724, and Asp-888 together coordinate Mg(2+). An ATP-binding site is contributed by Ser-890. The 254-residue stretch at 1046–1299 folds into the Glutamine amidotransferase type-1 domain; that stretch reads VAVLREQGVN…MFRNARVWLG (254 aa). Cys-1139 functions as the Nucleophile in the catalytic mechanism. Active-site residues include His-1264 and Glu-1266.

It in the N-terminal section; belongs to the FGAMS family. Monomer.

It is found in the cytoplasm. It carries out the reaction N(2)-formyl-N(1)-(5-phospho-beta-D-ribosyl)glycinamide + L-glutamine + ATP + H2O = 2-formamido-N(1)-(5-O-phospho-beta-D-ribosyl)acetamidine + L-glutamate + ADP + phosphate + H(+). Its pathway is purine metabolism; IMP biosynthesis via de novo pathway; 5-amino-1-(5-phospho-D-ribosyl)imidazole from N(2)-formyl-N(1)-(5-phospho-D-ribosyl)glycinamide: step 1/2. In terms of biological role, phosphoribosylformylglycinamidine synthase involved in the purines biosynthetic pathway. Catalyzes the ATP-dependent conversion of formylglycinamide ribonucleotide (FGAR) and glutamine to yield formylglycinamidine ribonucleotide (FGAM) and glutamate. The chain is Phosphoribosylformylglycinamidine synthase from Myxococcus xanthus (strain DK1622).